Here is a 467-residue protein sequence, read N- to C-terminus: Hydroxyacid-oxoacid transhydrogenase, mitochondrial (467 aa).

Lys445 is modified (N6-acetyllysine). Ser452 carries the post-translational modification Phosphoserine.

Belongs to the iron-containing alcohol dehydrogenase family. Hydroxyacid-oxoacid transhydrogenase subfamily. As to expression, only expressed in adult liver.

The protein localises to the mitochondrion. It carries out the reaction (S)-3-hydroxybutanoate + 2-oxoglutarate = (R)-2-hydroxyglutarate + acetoacetate. The catalysed reaction is 4-hydroxybutanoate + 2-oxoglutarate = (R)-2-hydroxyglutarate + succinate semialdehyde. Functionally, catalyzes the cofactor-independent reversible oxidation of gamma-hydroxybutyrate (GHB) to succinic semialdehyde (SSA) coupled to reduction of 2-ketoglutarate (2-KG) to D-2-hydroxyglutarate (D-2-HG). D,L-3-hydroxyisobutyrate and L-3-hydroxybutyrate (L-3-OHB) are also substrates for HOT with 10-fold lower activities. The chain is Hydroxyacid-oxoacid transhydrogenase, mitochondrial (ADHFE1) from Homo sapiens (Human).